Consider the following 115-residue polypeptide: Photosystem II reaction center Psb28 protein (115 aa).

This sequence belongs to the Psb28 family. Part of the photosystem II complex.

It localises to the plastid. The protein resides in the chloroplast thylakoid membrane. This is Photosystem II reaction center Psb28 protein from Cyanidium caldarium (Red alga).